We begin with the raw amino-acid sequence, 218 residues long: MSNVNKVYDWFEERLEIQAIADDITSKYVPPHVNIFYCLGGITLTCFLVQVATGFAMTFYYRPIVNEAFASVQYIMIEANFGWLIRSVHRWSASMMVLMMILHVFRVYLTGGFKKPRELTWVTGVLLGVLTASFGVTGYSLPWDQTGYWAIKIVTGVPEAIPLIGAPMVELLRGSASVGQFTLTRFYSLHTFVLPLITIVFMLMHFLMIRKQGISGPL.

The chain crosses the membrane as a helical span at residues 35 to 55; sequence IFYCLGGITLTCFLVQVATGF. Cysteine 38 provides a ligand contact to heme c. The heme b site is built by histidine 89 and histidine 103. 3 helical membrane passes run 93–113, 119–139, and 189–209; these read ASMMVLMMILHVFRVYLTGGF, LTWVTGVLLGVLTASFGVTGY, and LHTFVLPLITIVFMLMHFLMI. Residues histidine 190 and histidine 205 each coordinate heme b.

This sequence belongs to the cytochrome b family. PetB subfamily. In terms of assembly, the 4 large subunits of the cytochrome b6-f complex are cytochrome b6, subunit IV (17 kDa polypeptide, PetD), cytochrome f and the Rieske protein, while the 4 small subunits are PetG, PetL, PetM and PetN. The complex functions as a dimer. The cofactor is heme b. It depends on heme c as a cofactor.

It is found in the plastid thylakoid membrane. In terms of biological role, component of the cytochrome b6-f complex, which mediates electron transfer between photosystem II (PSII) and photosystem I (PSI), cyclic electron flow around PSI, and state transitions. The protein is Cytochrome b6 (petB) of Cuscuta gronovii (Common dodder).